The chain runs to 212 residues: COP9 signalosome complex subunit 8 (212 aa).

The 168-residue stretch at 26–193 (TSLSAYEEQA…KPVVTAPPKD (168 aa)) folds into the PCI domain.

It belongs to the CSN8 family. As to quaternary structure, component of the COP9 signalosome (CSN) complex.

The protein localises to the cytoplasm. It is found in the nucleus. In terms of biological role, component of the COP9 signalosome (CSN) complex that acts as an regulator of the ubiquitin (Ubl) conjugation pathway by mediating the deneddylation of the cullin subunit of SCF-type E3 ubiquitin-protein ligase complexes. The CSN complex seems to link protein degradation to sexual development. In Emericella nidulans (strain FGSC A4 / ATCC 38163 / CBS 112.46 / NRRL 194 / M139) (Aspergillus nidulans), this protein is COP9 signalosome complex subunit 8 (csnH).